Here is a 179-residue protein sequence, read N- to C-terminus: Peptidyl-prolyl cis-trans isomerase H (179 aa).

The PPIase cyclophilin-type domain maps to 16 to 178 (FFDISIGDTP…LQVRIAECGE (163 aa)).

Belongs to the cyclophilin-type PPIase family. PPIase H subfamily.

The protein localises to the nucleus. It carries out the reaction [protein]-peptidylproline (omega=180) = [protein]-peptidylproline (omega=0). In terms of biological role, PPIases accelerate the folding of proteins. It catalyzes the cis-trans isomerization of proline imidic peptide bonds in oligopeptides. This chain is Peptidyl-prolyl cis-trans isomerase H (CYP3), found in Cryptococcus neoformans var. neoformans serotype D (strain B-3501A) (Filobasidiella neoformans).